Here is a 1123-residue protein sequence, read N- to C-terminus: MPRAPRCRAVRALLRGRYREVLPLATFLRRLGPPGRLLVRRGDPAAFRALVAQCLVCVPWGARPPPAAPCFRQVSCLKELVARVVQRLCERGARNVLAFGFALLDGARGGPPVAFTTSVRSYLPNTVTETLRGSGAWGLLLRRVGDDVLTHLLARCALYLLVAPSCAYQVCGPPLYDLCAPASLPLPAPGLPGLPGLPGLGAGAGASADLRPTRQAQNSGARRRRGSPGSGVPLAKRPRRSVASEPERGAHRSFPRAQQPPVSEAPAVTPAVAASPAASWEGGPPGTRPTTPAWHPYPGPQGVPHDPAHPETKRFLYCSGGRERLRPSFLLSALPPTLSGARKLVETIFLGSAPQKPGAARRMRRLPARYWRMRPLFQELLGNHARCPYRALLRTHCPLRAMAAKEGSGNQAHRGVGICPLERPVAAPQEQTDSTRLVQLLRQHSSPWQVYAFLRACLCWLVPTGLWGSRHNQRRFLRNVKKFISLGKHAKLSLQELTWKMKVRDCTWLHGNPGACCVPAAEHRRREEILARFLVLVDGHIYVVKLLRSFFYVTETTFQKNRLFFYRKSVWSQLQSIGIRQLFNSVHLRELSEAEVRRHREARPALLTSRLRFLPKPSGLRPIVNMDYIMGARTFHRDKKVQHLTSQLKTLFSVLNYERARRPSLLGASMLGMDDIHRAWRTFVLRIRAQNPAPQLYFVKVDVTGAYDALPQDRLVEVIANVIRPQESTYCVRHYAVVQRTARGHVRKAFKRHVSTFADLQPYMRQFVERLQETSLLRDAVVIEQSSSLNEAGSSLFHLFLRLVHNHVVRIGGKSYIQCQGVPQGSILSTLLCSLCYGDMERRLFPGIEQDGVLLRLVDDFLLVTPHLTQAQAFLRTLVKGVPEYGCRANLQKTAVNFPVEDGALGSAAPLQLPAHCLFPWCGLLLDTRTLEVSCDYSSYAHTSIRASLTFSQGAKPGRNMRRKLLAVLRLKCCALFLDLQVNGIHTVYMNVYKIFLLQAYRFHACVLQLPFNQPVRKNPSFFLRVIADTASCCYSLLKARNAGLSLGAKGASGLFPSEAARWLCLHAFLLKLAHHSGTYRCLLGALQAAKAHLSRQLPRGTLAALEAAADPSLTADFKTILD.

The tract at residues 1–230 (MPRAPRCRAV…ARRRRGSPGS (230 aa)) is RNA-interacting domain 1. A GQ motif region spans residues 58–197 (VPWGARPPPA…APGLPGLPGL (140 aa)). The segment at 137-141 (WGLLL) is required for regulating specificity for telomeric DNA and for processivity for primer elongation. The disordered stretch occupies residues 202-311 (AGAGASADLR…GVPHDPAHPE (110 aa)). Positions 222-240 (RRRRGSPGSGVPLAKRPRR) match the Bipartite nuclear localization signal motif. Position 227 is a phosphoserine; by PKB/AKT1 (Ser227). Residues 231–308 (GVPLAKRPRR…GPQGVPHDPA (78 aa)) form a linker region. The segment covering 260-279 (PPVSEAPAVTPAVAASPAAS) has biased composition (low complexity). Residues 309–539 (HPETKRFLYC…LARFLVLVDG (231 aa)) form an RNA-interacting domain 2 region. Positions 312-317 (TKRFLY) match the TFLY; involved in RNA binding motif. The tract at residues 360 to 510 (ARRMRRLPAR…MKVRDCTWLH (151 aa)) is QFP motif. Residues 381-401 (LGNHARCPYRALLRTHCPLRA) form a CP motif region. The residue at position 446 (Ser446) is a Phosphoserine; by DYRK2. One can recognise a Reverse transcriptase domain in the interval 595-926 (EVRRHREARP…CLFPWCGLLL (332 aa)). Position 697 is a phosphotyrosine; by SRC-type Tyr-kinases (Tyr697). Positions 702, 859, and 860 each coordinate Mg(2+). The tract at residues 905 to 919 (LGSAAPLQLPAHCLF) is required for oligomerization. Residues 921–925 (WCGLL) are primer grip sequence. Positions 927 to 1123 (DTRTLEVSCD…LTADFKTILD (197 aa)) are CTE.

The protein belongs to the reverse transcriptase family. Telomerase subfamily. As to quaternary structure, catalytic component of the telomerase holoenzyme complex composed of one molecule of TERT, one molecule of WRAP53/TCAB1, two molecules of H/ACA ribonucleoprotein complex subunits DKC1, NOP10, NHP2 and GAR1, and a telomerase RNA template component (TERC). The telomerase holoenzyme complex is associated with TEP1, SMG6/EST1A and POT1. The molecular chaperone HSP90/P23 complex is required for correct assembly and stabilization of the active telomerase. Interacts directly with HSP90A and PTGES3. Interacts with HSPA1A; the interaction occurs in the absence of TERC and dissociates once the complex has formed. Interacts with RAN; the interaction promotes nuclear export of TERT. Interacts with XPO1. Interacts with PTPN11; the interaction retains TERT in the nucleus. Interacts with NCL (via RRM1 and C-terminal RRM4/Arg/Gly-rich domains); the interaction is important for nucleolar localization of TERT. Interacts with SMARCA4 (via the bromodomain); the interaction regulates Wnt-mediated signaling. Interacts with MCRS1 (isoform MCRS2); the interaction inhibits in vitro telomerase activity. Interacts with PIF1; the interaction has no effect on the elongation activity of TERT. Interacts with PML; the interaction recruits TERT to PML bodies and inhibits telomerase activity. Interacts with GNL3L. Interacts with isoform 1 and isoform 2 of NVL. Interacts with DHX36. Interacts with ATF7. Post-translationally, phosphorylation at Tyr-697 under oxidative stress leads to translocation of TERT to the cytoplasm and reduces its antiapoptotic activity. Dephosphorylated by SHP2/PTPN11 leading to nuclear retention. Phosphorylation at Ser-227 by the AKT pathway promotes nuclear location. Phosphorylation at the G2/M phase at Ser-446 by DYRK2 promotes ubiquitination by the EDVP complex and degradation. In terms of processing, ubiquitinated by the EDVP complex, a E3 ligase complex following phosphorylation at Ser-446 by DYRK2. Ubiquitinated leads to proteasomal degradation.

The protein localises to the nucleus. Its subcellular location is the nucleolus. It localises to the nucleoplasm. The protein resides in the chromosome. It is found in the telomere. The protein localises to the cytoplasm. Its subcellular location is the PML body. The enzyme catalyses DNA(n) + a 2'-deoxyribonucleoside 5'-triphosphate = DNA(n+1) + diphosphate. In terms of biological role, telomerase is a ribonucleoprotein enzyme essential for the replication of chromosome termini in most eukaryotes. Active in progenitor and cancer cells. Inactive, or very low activity, in normal somatic cells. Catalytic component of the teleromerase holoenzyme complex whose main activity is the elongation of telomeres by acting as a reverse transcriptase that adds simple sequence repeats to chromosome ends by copying a template sequence within the RNA component of the enzyme. Catalyzes the RNA-dependent extension of 3'-chromosomal termini with the 6-nucleotide telomeric repeat unit, 5'-TTAGGG-3'. The catalytic cycle involves primer binding, primer extension and release of product once the template boundary has been reached or nascent product translocation followed by further extension. More active on substrates containing 2 or 3 telomeric repeats. Telomerase activity is regulated by a number of factors including telomerase complex-associated proteins, chaperones and polypeptide modifiers. Modulates Wnt signaling. Plays important roles in aging and antiapoptosis. This Canis lupus familiaris (Dog) protein is Telomerase reverse transcriptase (TERT).